The sequence spans 151 residues: Small ribosomal subunit protein uS13 (151 aa).

A disordered region spans residues 131-151 (RGQRTKSSFRRGRTVGVKKKQ). Basic residues predominate over residues 133 to 151 (QRTKSSFRRGRTVGVKKKQ).

It belongs to the universal ribosomal protein uS13 family. In terms of assembly, part of the 30S ribosomal subunit. Forms a loose heterodimer with protein S19. Forms two bridges to the 50S subunit in the 70S ribosome.

In terms of biological role, located at the top of the head of the 30S subunit, it contacts several helices of the 16S rRNA. In the 70S ribosome it contacts the 23S rRNA (bridge B1a) and protein L5 of the 50S subunit (bridge B1b), connecting the 2 subunits; these bridges are implicated in subunit movement. The sequence is that of Small ribosomal subunit protein uS13 from Methanopyrus kandleri (strain AV19 / DSM 6324 / JCM 9639 / NBRC 100938).